The sequence spans 642 residues: MEKISVAVRFRPPTTAAPAADQSPSSTGGDREWRVDDDTRITLLHRSAPVPGASFAFDHVFDGAATNERIYGVLVRSLIRAAVDGFNGTAFAYGQTSSGKTFTMNGSADHPGIIPLAVRDVFDTAREVSDREFLIRVSYMEIYNEEINDLLTLGSEKLPIHESLERGVYVSGLREEIVNSAEQVFKLLELGEANRHFGETNMNVRSSRSHTIFRMVIESSAKNHMDSGDAIRVSVLNLVDLAGSERIAKTGAGGVRLKEGKHINKSLMILGNVINKLSENGKQRGHIPYRDSKLTRILQPALGGNAKTSIICTAAPEEIHVEETRGTLQFASRAKCVSNCAQVNEILTDAALLKRQKQEIEELRKKLQGSHSEVLEQVILKQRNDMHKSELERDRLAMELDEERRLRETLEHRLAEQQKMLDGISNTSISPDQFTDSIQFESLKTPTSKERPAEFVASRANYSKDVEFSPIPENLGTVADEDLWMQLNKGCVTDLEMLEMTPGFKCAPSLADDKASVATPDEEPIDARCQRLEKDCTADRQQLEDSKAWRAALEEERDTLKRENSSLLDALAKARQDADHLVADRLEALRELDMEKSRMDELKQEIKLFSQAFSLRQGQLTSLYTKSKAIVENCKTSQLALP.

In terms of domain architecture, Kinesin motor spans 3 to 337; it reads KISVAVRFRP…LQFASRAKCV (335 aa). Low complexity predominate over residues 12–27; the sequence is PPTTAAPAADQSPSST. Residues 12–33 are disordered; the sequence is PPTTAAPAADQSPSSTGGDREW. Residue 94 to 101 participates in ATP binding; the sequence is GQTSSGKT. Coiled-coil stretches lie at residues 343-428 and 540-612; these read VNEI…SNTS and RQQL…FSQA.

This sequence belongs to the TRAFAC class myosin-kinesin ATPase superfamily. Kinesin family. KIN-7 subfamily.

In Oryza sativa subsp. japonica (Rice), this protein is Kinesin-like protein KIN-7L.